We begin with the raw amino-acid sequence, 393 residues long: Riboflavin biosynthesis protein RibBA (393 aa).

Residues 1–200 are DHBP synthase; the sequence is MQFDNIDSAL…IDDLIEYRKK (200 aa). Residues 27–28, Asp32, 139–143, and Glu163 contribute to the D-ribulose 5-phosphate site; these read RE and RNGHT. Glu28 is a binding site for Mg(2+). His142 is a Mg(2+) binding site. The tract at residues 201–393 is GTP cyclohydrolase II; the sequence is LEPEIEFKAK…TKKIKMGHLI (193 aa). 249-253 contributes to the GTP binding site; sequence RLHSA. Residues Cys254, Cys265, and Cys267 each contribute to the Zn(2+) site. GTP-binding positions include Gln270, 291–293, and Thr313; that span reads EGR. Catalysis depends on Asp325, which acts as the Proton acceptor; for GTP cyclohydrolase activity. The active-site Nucleophile; for GTP cyclohydrolase activity is Arg327. GTP is bound by residues Ser348 and Lys353.

In the N-terminal section; belongs to the DHBP synthase family. It in the C-terminal section; belongs to the GTP cyclohydrolase II family. Requires Mg(2+) as cofactor. It depends on Mn(2+) as a cofactor. Zn(2+) serves as cofactor.

It carries out the reaction D-ribulose 5-phosphate = (2S)-2-hydroxy-3-oxobutyl phosphate + formate + H(+). It catalyses the reaction GTP + 4 H2O = 2,5-diamino-6-hydroxy-4-(5-phosphoribosylamino)-pyrimidine + formate + 2 phosphate + 3 H(+). It functions in the pathway cofactor biosynthesis; riboflavin biosynthesis; 2-hydroxy-3-oxobutyl phosphate from D-ribulose 5-phosphate: step 1/1. It participates in cofactor biosynthesis; riboflavin biosynthesis; 5-amino-6-(D-ribitylamino)uracil from GTP: step 1/4. Functionally, catalyzes the conversion of D-ribulose 5-phosphate to formate and 3,4-dihydroxy-2-butanone 4-phosphate. Its function is as follows. Catalyzes the conversion of GTP to 2,5-diamino-6-ribosylamino-4(3H)-pyrimidinone 5'-phosphate (DARP), formate and pyrophosphate. This chain is Riboflavin biosynthesis protein RibBA, found in Staphylococcus aureus (strain COL).